The primary structure comprises 419 residues: Multifunctional CCA protein (419 aa).

ATP is bound by residues G8 and R11. Residues G8 and R11 each contribute to the CTP site. Positions 21 and 23 each coordinate Mg(2+). Positions 91, 141, and 144 each coordinate ATP. Residues R91, R141, and R144 each coordinate CTP. The HD domain occupies 230–331 (TGVHVMMVLD…VRLLERCDAL (102 aa)).

This sequence belongs to the tRNA nucleotidyltransferase/poly(A) polymerase family. Bacterial CCA-adding enzyme type 1 subfamily. Monomer. Can also form homodimers and oligomers. It depends on Mg(2+) as a cofactor. Ni(2+) is required as a cofactor.

The enzyme catalyses a tRNA precursor + 2 CTP + ATP = a tRNA with a 3' CCA end + 3 diphosphate. The catalysed reaction is a tRNA with a 3' CCA end + 2 CTP + ATP = a tRNA with a 3' CCACCA end + 3 diphosphate. Catalyzes the addition and repair of the essential 3'-terminal CCA sequence in tRNAs without using a nucleic acid template. Adds these three nucleotides in the order of C, C, and A to the tRNA nucleotide-73, using CTP and ATP as substrates and producing inorganic pyrophosphate. tRNA 3'-terminal CCA addition is required both for tRNA processing and repair. Also involved in tRNA surveillance by mediating tandem CCA addition to generate a CCACCA at the 3' terminus of unstable tRNAs. While stable tRNAs receive only 3'-terminal CCA, unstable tRNAs are marked with CCACCA and rapidly degraded. The protein is Multifunctional CCA protein of Paracidovorax citrulli (strain AAC00-1) (Acidovorax citrulli).